The sequence spans 410 residues: UDP-N-acetylglucosamine--dolichyl-phosphate N-acetylglucosaminephosphotransferase (410 aa).

Topologically, residues 1–10 (MWAFPELPLP) are lumenal. A helical transmembrane segment spans residues 11–40 (LPLLVNLIGSLLGFVATVTLIPAFRSHFIA). Over 41-60 (ARLCGQDLNKLSQQQIPESQ) the chain is Cytoplasmic. UDP-N-acetyl-alpha-D-glucosamine contacts are provided by residues 46 to 48 (QDL) and Glu58. The chain crosses the membrane as a helical span at residues 61–80 (GVISGAVFLIILFCFIPFPF). The Lumenal segment spans residues 81–93 (LNCFVEEQCKAFP). Residues 94-120 (HHEFVALIGALLAICCMIFLGFADDVL) form a helical membrane-spanning segment. Topologically, residues 121–123 (NLR) are cytoplasmic. The chain crosses the membrane as a helical span at residues 124–145 (WRHKLLLPTAASLPLLMVYFTN). Lys127 contributes to the dolichyl phosphate binding site. Residues 146–168 (FGNTTIVVPKPFRWILGLHLDLG) lie on the Lumenal side of the membrane. Asn148 carries an N-linked (GlcNAc...) asparagine glycan. The helical transmembrane segment at 169–188 (ILYYVYMGLLAVFCTNAINI) threads the bilayer. 180–188 (VFCTNAINI) serves as a coordination point for dolichyl phosphate. Asn187 serves as a coordination point for Mg(2+). Residues 189-194 (LAGING) lie on the Cytoplasmic side of the membrane. Residue Asn193 participates in UDP-N-acetyl-alpha-D-glucosamine binding. Residues 195–215 (LEAGQSLVISASIIVFNLVEL) form a helical membrane-spanning segment. Over 216-220 (EGDYR) the chain is Lumenal. The helical transmembrane segment at 221-244 (DDHIFSLYFMIPFFFTTLGLLYHN) threads the bilayer. The Cytoplasmic portion of the chain corresponds to 245 to 252 (WYPSRVFV). Residues 253-271 (GDTFCYFAGMTFAVVGILG) form a helical membrane-spanning segment. Asp254 provides a ligand contact to Mg(2+). Residues 272–273 (HF) lie on the Lumenal side of the membrane. Residues 274–295 (SKTMLLFFMPQVFNFLYSLPQL) form a helical membrane-spanning segment. At 296 to 377 (FHIIPCPRHR…LLLKVFGPIH (82 aa)) the chain is on the cytoplasmic side. 303-305 (RHR) is a binding site for UDP-N-acetyl-alpha-D-glucosamine. Residues 378-402 (ERNLTLLLLLLQVLSSAATFSIRYQ) traverse the membrane as a helical segment. Topologically, residues 403–410 (LVRLFYDV) are lumenal.

It belongs to the glycosyltransferase 4 family. As to quaternary structure, homodimer. The cofactor is Mg(2+).

It is found in the endoplasmic reticulum membrane. The enzyme catalyses a di-trans,poly-cis-dolichyl phosphate + UDP-N-acetyl-alpha-D-glucosamine = an N-acetyl-alpha-D-glucosaminyl-diphospho-di-trans,poly-cis-dolichol + UMP. It functions in the pathway protein modification; protein glycosylation. With respect to regulation, inhibited by natural nucleoside antibiotic tunicamycin, which acts as a structural analog and competitor of UDP-GlcNAc. Its function is as follows. UDP-N-acetylglucosamine--dolichyl-phosphate N-acetylglucosaminephosphotransferase that operates in the biosynthetic pathway of dolichol-linked oligosaccharides, the glycan precursors employed in protein asparagine (N)-glycosylation. The assembly of dolichol-linked oligosaccharides begins on the cytosolic side of the endoplasmic reticulum membrane and finishes in its lumen. The sequential addition of sugars to dolichol pyrophosphate produces dolichol-linked oligosaccharides containing fourteen sugars, including two GlcNAcs, nine mannoses and three glucoses. Once assembled, the oligosaccharide is transferred from the lipid to nascent proteins by oligosaccharyltransferases. Catalyzes the initial step of dolichol-linked oligosaccharide biosynthesis, transfering GlcNAc-1-P from cytosolic UDP-GlcNAc onto the carrier lipid dolichyl phosphate (P-dolichol), yielding GlcNAc-P-P-dolichol embedded in the cytoplasmic leaflet of the endoplasmic reticulum membrane. The chain is UDP-N-acetylglucosamine--dolichyl-phosphate N-acetylglucosaminephosphotransferase from Mus musculus (Mouse).